The primary structure comprises 61 residues: MGMRMMFTVFLLVVLATTVVSFMSGRASHGRNAAASDLIALTIKGCCSVPPCIANHPELCV.

The N-terminal stretch at 1–21 is a signal peptide; sequence MGMRMMFTVFLLVVLATTVVS. The propeptide occupies 22-44; that stretch reads FMSGRASHGRNAAASDLIALTIK.

Belongs to the conotoxin A superfamily. Post-translationally, is not hydroxylated. In terms of processing, contains 2 disulfide bonds. As to expression, expressed by the venom duct.

It localises to the secreted. Its function is as follows. Alpha-conotoxins act on postsynaptic membranes, they bind to the nicotinic acetylcholine receptors (nAChR) and thus inhibit them. This is Alpha-conotoxine-like Am1.4 from Conus amadis (Amadis cone).